Here is a 359-residue protein sequence, read N- to C-terminus: UDP-3-O-acylglucosamine N-acyltransferase (359 aa).

Catalysis depends on H256, which acts as the Proton acceptor.

This sequence belongs to the transferase hexapeptide repeat family. LpxD subfamily. As to quaternary structure, homotrimer.

The catalysed reaction is a UDP-3-O-[(3R)-3-hydroxyacyl]-alpha-D-glucosamine + a (3R)-hydroxyacyl-[ACP] = a UDP-2-N,3-O-bis[(3R)-3-hydroxyacyl]-alpha-D-glucosamine + holo-[ACP] + H(+). It functions in the pathway bacterial outer membrane biogenesis; LPS lipid A biosynthesis. In terms of biological role, catalyzes the N-acylation of UDP-3-O-acylglucosamine using 3-hydroxyacyl-ACP as the acyl donor. Is involved in the biosynthesis of lipid A, a phosphorylated glycolipid that anchors the lipopolysaccharide to the outer membrane of the cell. The sequence is that of UDP-3-O-acylglucosamine N-acyltransferase from Rhodopseudomonas palustris (strain BisB5).